A 147-amino-acid polypeptide reads, in one-letter code: Prefoldin subunit alpha (147 aa).

Belongs to the prefoldin alpha subunit family. In terms of assembly, heterohexamer of two alpha and four beta subunits.

The protein resides in the cytoplasm. Functionally, molecular chaperone capable of stabilizing a range of proteins. Seems to fulfill an ATP-independent, HSP70-like function in archaeal de novo protein folding. The chain is Prefoldin subunit alpha from Saccharolobus islandicus (strain L.S.2.15 / Lassen #1) (Sulfolobus islandicus).